An 834-amino-acid chain; its full sequence is MALVSPIPAMGERAGSMRFHGIGSPGSRSSRSGIMDEPVSRLIDEKIFVAVDKHVAKSKSTLIWALQNTGGKKICLIHVHQPSQMIPLMGAKFPVGAVKEEEVRVFREKEREKVHMILDDYLRICQQRGVRAEKMFIEMESIENGIVQLISELGIRKLVMGAAADRHYSRRMTDLKSRKAIFVRREAPTLCQIWFTCKGYLIHTREATMDDTESEYASPRPSISASDLLQTFSTPESEHQHISRVQSTDSVQQLVSNGSSTEQSGRVSDGSLNTDEEERESDGSEVTGSATVMSSGHSSPSSFPDGVDDSFNVKIRKATSEAHSSKQEAFAETLRRQKAEKNALDAIRRAKQSESAYSEELKRRKDTEIAVAKEKERFITIKNEQEVIMEELQSAMAQKAMLESQIAKSDGTMEKLNQKLDIAVKLLQKLRDEREELQTERDRALREAEELRSHAETSTLQLPQYFTDFSFSEIEEATNHFDSTLKIGEGGYGSIYVGLLRHTQVAIKMLNPNSSQGPVEYQQEVDVLSKMRHPNIITLIGACPEGWSLVYEYLPGGSLEDRLTCKDNSPPLSWQNRVRIATEICAALVFLHSNKAHSLVHGDLKPANILLDSNLVSKLSDFGTCSLLHPNGSKSVRTDVTGTVAYLDPEASSSGELTPKSDVYSFGIILLRLLTGRPALRISNEVKYALDNGTLNDLLDPLAGDWPFVQAEQLARLALRCCETVSENRPDLGTEVWRVLEPMRASSGGSSSFHLGRNEHRIAPPYFICPIFQEVMQDPHVAADGFTYEAEAIRAWLDSEHDTSPMTNVKLSHTSLIANHALRSAIQEWLQHHL.

Residues 232–308 form a disordered region; that stretch reads FSTPESEHQH…SPSSFPDGVD (77 aa). 2 stretches are compositionally biased toward polar residues: residues 243-273 and 284-293; these read SRVQ…GSLN and SEVTGSATVM. A coiled-coil region spans residues 334-462; sequence LRRQKAEKNA…SHAETSTLQL (129 aa). In terms of domain architecture, Protein kinase spans 481–744; the sequence is FDSTLKIGEG…EVWRVLEPMR (264 aa). ATP-binding positions include 487–495 and K508; that span reads IGEGGYGSI. The active-site Proton acceptor is D603. One can recognise a U-box domain in the interval 762–834; that stretch reads IAPPYFICPI…AIQEWLQHHL (73 aa).

It belongs to the protein kinase superfamily. Ser/Thr protein kinase family.

The enzyme catalyses L-seryl-[protein] + ATP = O-phospho-L-seryl-[protein] + ADP + H(+). The catalysed reaction is L-threonyl-[protein] + ATP = O-phospho-L-threonyl-[protein] + ADP + H(+). It carries out the reaction S-ubiquitinyl-[E2 ubiquitin-conjugating enzyme]-L-cysteine + [acceptor protein]-L-lysine = [E2 ubiquitin-conjugating enzyme]-L-cysteine + N(6)-ubiquitinyl-[acceptor protein]-L-lysine.. It functions in the pathway protein modification; protein ubiquitination. Functions as an E3 ubiquitin ligase. The polypeptide is U-box domain-containing protein 33 (PUB33) (Arabidopsis thaliana (Mouse-ear cress)).